We begin with the raw amino-acid sequence, 311 residues long: Probable manganese-dependent inorganic pyrophosphatase (311 aa).

His9, Asp13, Asp15, Asp75, His97, and Asp149 together coordinate Mn(2+).

Belongs to the PPase class C family. Requires Mn(2+) as cofactor.

It localises to the cytoplasm. It carries out the reaction diphosphate + H2O = 2 phosphate + H(+). The polypeptide is Probable manganese-dependent inorganic pyrophosphatase (Lactobacillus delbrueckii subsp. bulgaricus (strain ATCC BAA-365 / Lb-18)).